Here is a 444-residue protein sequence, read N- to C-terminus: Phosphoglucosamine mutase (444 aa).

Catalysis depends on serine 102, which acts as the Phosphoserine intermediate. Positions 102, 239, 241, and 243 each coordinate Mg(2+). Position 102 is a phosphoserine (serine 102).

Belongs to the phosphohexose mutase family. Mg(2+) serves as cofactor. Post-translationally, activated by phosphorylation.

The enzyme catalyses alpha-D-glucosamine 1-phosphate = D-glucosamine 6-phosphate. Catalyzes the conversion of glucosamine-6-phosphate to glucosamine-1-phosphate. This is Phosphoglucosamine mutase from Mycolicibacterium paratuberculosis (strain ATCC BAA-968 / K-10) (Mycobacterium paratuberculosis).